The primary structure comprises 462 residues: Dipeptidyl peptidase 1 (462 aa).

A signal peptide spans 1 to 24 (MGPWTHSLRAALLLVLLGVCTVSS). N-linked (GlcNAc...) asparagine glycans are attached at residues Asn29 and Asn53. 2 disulfide bridges follow: Cys30–Cys118 and Cys54–Cys136. The propeptide occupies 135 to 229 (ACFVGKKMAN…TDEIQQQILS (95 aa)). Asn144 carries N-linked (GlcNAc...) asparagine glycosylation. Disulfide bonds link Cys254-Cys297, Cys290-Cys330, and Cys320-Cys336. The active site involves Cys257. The N-linked (GlcNAc...) asparagine glycan is linked to Asn275. Chloride contacts are provided by Phe301 and Tyr303. Chloride is bound at residue Tyr346. Residues His404 and Asn426 contribute to the active site.

This sequence belongs to the peptidase C1 family. As to quaternary structure, tetramer of heterotrimers consisting of exclusion domain, heavy- and light chains. Requires chloride as cofactor. In terms of tissue distribution, broadly distributed, but higher levels found in liver, spleen, intestine, lung and kidney.

The protein resides in the lysosome. It catalyses the reaction Release of an N-terminal dipeptide, Xaa-Yaa-|-Zaa-, except when Xaa is Arg or Lys, or Yaa or Zaa is Pro.. In terms of biological role, thiol protease. Has dipeptidylpeptidase activity. Active against a broad range of dipeptide substrates composed of both polar and hydrophobic amino acids. Proline cannot occupy the P1 position and arginine cannot occupy the P2 position of the substrate. Can act as both an exopeptidase and endopeptidase. Activates serine proteases such as elastase, cathepsin G and granzymes A and B. This chain is Dipeptidyl peptidase 1 (Ctsc), found in Rattus norvegicus (Rat).